We begin with the raw amino-acid sequence, 251 residues long: uncharacterized protein (251 aa).

Residue 12-21 (TGASSQGDIG) coordinates NADP(+). Position 148 (serine 148) interacts with substrate. Tyrosine 161 serves as the catalytic Proton acceptor.

It belongs to the short-chain dehydrogenases/reductases (SDR) family.

This is an uncharacterized protein from Bacillus subtilis (strain 168).